Here is a 131-residue protein sequence, read N- to C-terminus: Profilin-2 (131 aa).

The protein belongs to the profilin family. In terms of assembly, occurs in many kinds of cells as a complex with monomeric actin in a 1:1 ratio.

The protein resides in the cytoplasm. Its subcellular location is the cytoskeleton. Binds to actin and affects the structure of the cytoskeleton. At high concentrations, profilin prevents the polymerization of actin, whereas it enhances it at low concentrations. By binding to PIP2, it inhibits the formation of IP3 and DG. This chain is Profilin-2 (PRO2), found in Triticum aestivum (Wheat).